We begin with the raw amino-acid sequence, 371 residues long: Phospho-N-acetylmuramoyl-pentapeptide-transferase (371 aa).

Transmembrane regions (helical) follow at residues 25-45 (TLLA…WLIA), 77-94 (MGGL…ALWA), 136-156 (IGWQ…HPAS), 172-192 (LIPH…IVGF), 204-224 (GLAI…AYVA), 240-260 (GTGE…AFLW), 269-289 (FMGD…AFMI), 296-316 (VIVG…VGVF), and 348-368 (KVVL…LATL).

Belongs to the glycosyltransferase 4 family. MraY subfamily. Mg(2+) is required as a cofactor.

The protein resides in the cell inner membrane. The catalysed reaction is UDP-N-acetyl-alpha-D-muramoyl-L-alanyl-gamma-D-glutamyl-meso-2,6-diaminopimeloyl-D-alanyl-D-alanine + di-trans,octa-cis-undecaprenyl phosphate = di-trans,octa-cis-undecaprenyl diphospho-N-acetyl-alpha-D-muramoyl-L-alanyl-D-glutamyl-meso-2,6-diaminopimeloyl-D-alanyl-D-alanine + UMP. It participates in cell wall biogenesis; peptidoglycan biosynthesis. Its function is as follows. Catalyzes the initial step of the lipid cycle reactions in the biosynthesis of the cell wall peptidoglycan: transfers peptidoglycan precursor phospho-MurNAc-pentapeptide from UDP-MurNAc-pentapeptide onto the lipid carrier undecaprenyl phosphate, yielding undecaprenyl-pyrophosphoryl-MurNAc-pentapeptide, known as lipid I. The sequence is that of Phospho-N-acetylmuramoyl-pentapeptide-transferase from Opitutus terrae (strain DSM 11246 / JCM 15787 / PB90-1).